A 1217-amino-acid chain; its full sequence is ATP-dependent helicase/nuclease subunit A (1217 aa).

Residues 10–475 (VIWTDAQWQS…IDLSQNFRSR (466 aa)) enclose the UvrD-like helicase ATP-binding domain. Residue 31-38 (AAAGSGKT) participates in ATP binding. A UvrD-like helicase C-terminal domain is found at 476–786 (KEVLSTTNYI…RMMTIHSSKG (311 aa)).

The protein belongs to the helicase family. AddA subfamily. Heterodimer of AddA and AddB/RexB. The cofactor is Mg(2+).

The enzyme catalyses Couples ATP hydrolysis with the unwinding of duplex DNA by translocating in the 3'-5' direction.. It carries out the reaction ATP + H2O = ADP + phosphate + H(+). The heterodimer acts as both an ATP-dependent DNA helicase and an ATP-dependent, dual-direction single-stranded exonuclease. Recognizes the chi site generating a DNA molecule suitable for the initiation of homologous recombination. The AddA nuclease domain is required for chi fragment generation; this subunit has the helicase and 3' -&gt; 5' nuclease activities. This Staphylococcus aureus (strain MRSA252) protein is ATP-dependent helicase/nuclease subunit A.